The following is a 275-amino-acid chain: MESEKVVVDELPLAIVRRVVKKKLSECSPDYDVSIHKEALLAFSESARIFIHYLSATANDFCKDARRQTMKADDVFKALEEMDFSEFLEPLKSSLEDFKKKNAGKKAGAAAASYPAGGAALKSSSGTASKPKETKKRKQEEPSTQKGARKSKIDEETKRNDEETENDNTEEENGNDEEDENGNDEEDENDDENTEENGNDEENDDENTEENGNDEENEKEDEENSMEENGNESEESGNEDHSMEENGSGVGEDNENEDGSVSGSGEEVESDEEDE.

A DNA-binding region spans residues L11–R17. Positions A112–K122 are enriched in low complexity. Residues A112–E275 form a disordered region. A Nuclear localization signal motif is present at residues K135 to P142. Residues S151 to D161 are compositionally biased toward basic and acidic residues. Positions K152–D179 form a coiled coil. 2 stretches are compositionally biased toward acidic residues: residues E162–G237 and E266–E275.

It belongs to the NFYB/HAP3 subunit family. In terms of assembly, heterotrimeric transcription factor composed of three components, NF-YA, NF-YB and NF-YC. NF-YB and NF-YC must interact and dimerize for NF-YA association and DNA binding. Binds directly with DPB3-1.

The protein resides in the nucleus. Component of the NF-Y/HAP transcription factor complex. The NF-Y complex stimulates the transcription of various genes by recognizing and binding to a CCAAT motif in promoters. The sequence is that of DNA polymerase II subunit B4 from Arabidopsis thaliana (Mouse-ear cress).